The sequence spans 95 residues: Co-chaperonin GroES (95 aa).

The protein belongs to the GroES chaperonin family. In terms of assembly, heptamer of 7 subunits arranged in a ring. Interacts with the chaperonin GroEL.

The protein resides in the cytoplasm. Functionally, together with the chaperonin GroEL, plays an essential role in assisting protein folding. The GroEL-GroES system forms a nano-cage that allows encapsulation of the non-native substrate proteins and provides a physical environment optimized to promote and accelerate protein folding. GroES binds to the apical surface of the GroEL ring, thereby capping the opening of the GroEL channel. The protein is Co-chaperonin GroES of Desulforapulum autotrophicum (strain ATCC 43914 / DSM 3382 / VKM B-1955 / HRM2) (Desulfobacterium autotrophicum).